We begin with the raw amino-acid sequence, 301 residues long: Aquaporin-10 (301 aa).

Over 1-22 (MVFTQAPAEIMGHLRIRSLLAR) the chain is Cytoplasmic. A helical membrane pass occupies residues 23 to 41 (QCLAEFLGVFVLMLLTQGA). Residues 42-55 (VAQAVTSGETKGNF) lie on the Extracellular side of the membrane. The chain crosses the membrane as a helical span at residues 56-75 (FTMFLAGSLAVTIAIYVGGN). Residues 76–77 (VS) are Cytoplasmic-facing. Positions 78-90 (GAHLNPAFSLAMC) form an intramembrane region, discontinuously helical. The NPA 1 motif lies at 82 to 84 (NPA). At 91 to 96 (IVGRLP) the chain is on the cytoplasmic side. The helical transmembrane segment at 97-121 (WVKLPIYILVQLLSAFCASGATYVL) threads the bilayer. Topologically, residues 122–158 (YHDALQNYTGGNLTVTGPKETASIFATYPAPYLSLNN) are extracellular. N128 and N133 each carry an N-linked (GlcNAc...) asparagine glycan. The helical transmembrane segment at 159 to 176 (GFLDQVLGTGMLIVGLLA) threads the bilayer. Topologically, residues 177–188 (ILDRRNKGVPAG) are cytoplasmic. Residues 189 to 205 (LEPVVVGMLILALGLSM) traverse the membrane as a helical segment. Topologically, residues 206–208 (GAN) are extracellular. Positions 209–223 (CGIPLNPARDLGPRL) form an intramembrane region, discontinuously helical. The NPA 2 motif lies at 214-216 (NPA). The Extracellular segment spans residues 224-241 (FTYVAGWGPEVFSAGNGW). A helical transmembrane segment spans residues 242-262 (WWVPVVAPLVGATVGTATYQL). Residues 263-301 (LVALHHPEGPEPAQDLVSAQHKASELETPASAQMLECKL) are Cytoplasmic-facing.

Belongs to the MIP/aquaporin (TC 1.A.8) family. Homotetramer; each monomer provides an independent glycerol/water pore. N-glycosylation at Asn-133 increases the stability of the protein but has no effect on its activity. Detected in epithelial cells on villi in the ileum, and also in stomach, jejunum, colon, rectum, white adipose tissue and placenta (at protein level). Expressed in duodenum and jejunum. Highest expression in absorptive epithelial cells at the tips of villi in the jejunum. Detected in subcutaneous adipose tissue.

Its subcellular location is the apical cell membrane. It localises to the cell membrane. The protein resides in the lipid droplet. It carries out the reaction glycerol(in) = glycerol(out). The catalysed reaction is H2O(in) = H2O(out). The enzyme catalyses urea(in) = urea(out). Glycerol transport is regulated by pH, with the porin being permeable to glycerol at pH 5.5 but not at pH 7.4. Water permeability, however, is not influenced by pH. Aquaglyceroporins form homotetrameric transmembrane channels, with each monomer independently mediating glycerol and water transport across the plasma membrane along their osmotic gradient. Could also be permeable to urea. Among aquaglyceroporins, it exhibits a unique pH-gated glycerol transport activity, being more active at acidic pH. It most likely plays a central role in the efflux of glycerol formed during triglyceride hydrolysis in adipocytes and in glycerol uptake by enterocytes, as both processes occur and are stimulated at acidic pH. In Homo sapiens (Human), this protein is Aquaporin-10.